The chain runs to 95 residues: Small ribosomal subunit protein bS6 (95 aa).

Belongs to the bacterial ribosomal protein bS6 family.

Its function is as follows. Binds together with bS18 to 16S ribosomal RNA. The chain is Small ribosomal subunit protein bS6 from Nocardia farcinica (strain IFM 10152).